The primary structure comprises 290 residues: Acetyl-coenzyme A carboxylase carboxyl transferase subunit beta (290 aa).

Residues 27-290 form the CoA carboxyltransferase N-terminal domain; it reads LWHKCPSCEA…FTHSPSPVSA (264 aa). The Zn(2+) site is built by Cys-31, Cys-34, Cys-50, and Cys-53. The C4-type zinc-finger motif lies at 31 to 53; it reads CPSCEAVLYRPELEKTLDVCPKC.

This sequence belongs to the AccD/PCCB family. Acetyl-CoA carboxylase is a heterohexamer composed of biotin carboxyl carrier protein (AccB), biotin carboxylase (AccC) and two subunits each of ACCase subunit alpha (AccA) and ACCase subunit beta (AccD). Zn(2+) is required as a cofactor.

The protein resides in the cytoplasm. The enzyme catalyses N(6)-carboxybiotinyl-L-lysyl-[protein] + acetyl-CoA = N(6)-biotinyl-L-lysyl-[protein] + malonyl-CoA. It participates in lipid metabolism; malonyl-CoA biosynthesis; malonyl-CoA from acetyl-CoA: step 1/1. In terms of biological role, component of the acetyl coenzyme A carboxylase (ACC) complex. Biotin carboxylase (BC) catalyzes the carboxylation of biotin on its carrier protein (BCCP) and then the CO(2) group is transferred by the transcarboxylase to acetyl-CoA to form malonyl-CoA. This Pseudomonas paraeruginosa (strain DSM 24068 / PA7) (Pseudomonas aeruginosa (strain PA7)) protein is Acetyl-coenzyme A carboxylase carboxyl transferase subunit beta.